We begin with the raw amino-acid sequence, 513 residues long: 2,3-bisphosphoglycerate-independent phosphoglycerate mutase (513 aa).

The Mn(2+) site is built by Asp13 and Ser63. Ser63 (phosphoserine intermediate) is an active-site residue. Substrate is bound by residues His124, 154-155 (RD), Arg186, Arg192, 262-265 (RADR), and Lys335. Mn(2+) is bound by residues Asp402, His406, Asp443, His444, and His462.

Belongs to the BPG-independent phosphoglycerate mutase family. Monomer. Mn(2+) serves as cofactor.

It carries out the reaction (2R)-2-phosphoglycerate = (2R)-3-phosphoglycerate. It functions in the pathway carbohydrate degradation; glycolysis; pyruvate from D-glyceraldehyde 3-phosphate: step 3/5. Its function is as follows. Catalyzes the interconversion of 2-phosphoglycerate and 3-phosphoglycerate. The polypeptide is 2,3-bisphosphoglycerate-independent phosphoglycerate mutase (Shewanella frigidimarina (strain NCIMB 400)).